We begin with the raw amino-acid sequence, 249 residues long: UPF0246 protein EUBREC_1226 (249 aa).

It belongs to the UPF0246 family.

The chain is UPF0246 protein EUBREC_1226 from Agathobacter rectalis (strain ATCC 33656 / DSM 3377 / JCM 17463 / KCTC 5835 / VPI 0990) (Eubacterium rectale).